A 347-amino-acid chain; its full sequence is ATP-dependent kinase YFH7 (347 aa).

Position 33-41 (33-41 (GPPGSGKST)) interacts with ATP.

This sequence belongs to the YFH7 family.

Its function is as follows. ATP-dependent kinase that could be involved in endoplasmic reticulum membrane assembly. This chain is ATP-dependent kinase YFH7 (YFH7), found in Lachancea thermotolerans (strain ATCC 56472 / CBS 6340 / NRRL Y-8284) (Yeast).